Here is a 75-residue protein sequence, read N- to C-terminus: Translation initiation factor IF-1 1 (75 aa).

The region spanning Met1–Arg74 is the S1-like domain.

Belongs to the IF-1 family. As to quaternary structure, component of the 30S ribosomal translation pre-initiation complex which assembles on the 30S ribosome in the order IF-2 and IF-3, IF-1 and N-formylmethionyl-tRNA(fMet); mRNA recruitment can occur at any time during PIC assembly.

Its subcellular location is the cytoplasm. In terms of biological role, one of the essential components for the initiation of protein synthesis. Stabilizes the binding of IF-2 and IF-3 on the 30S subunit to which N-formylmethionyl-tRNA(fMet) subsequently binds. Helps modulate mRNA selection, yielding the 30S pre-initiation complex (PIC). Upon addition of the 50S ribosomal subunit IF-1, IF-2 and IF-3 are released leaving the mature 70S translation initiation complex. This chain is Translation initiation factor IF-1 1, found in Symbiobacterium thermophilum (strain DSM 24528 / JCM 14929 / IAM 14863 / T).